A 120-amino-acid polypeptide reads, in one-letter code: Urease subunit beta (120 aa).

It belongs to the urease beta subunit family. Heterotrimer of UreA (gamma), UreB (beta) and UreC (alpha) subunits. Three heterotrimers associate to form the active enzyme.

The protein resides in the cytoplasm. It carries out the reaction urea + 2 H2O + H(+) = hydrogencarbonate + 2 NH4(+). The protein operates within nitrogen metabolism; urea degradation; CO(2) and NH(3) from urea (urease route): step 1/1. In Corynebacterium efficiens (strain DSM 44549 / YS-314 / AJ 12310 / JCM 11189 / NBRC 100395), this protein is Urease subunit beta.